Consider the following 464-residue polypeptide: Cysteine--tRNA ligase (464 aa).

Cys-32 is a Zn(2+) binding site. The short motif at 34–44 (VTVYDDCHIGH) is the 'HIGH' region element. Positions 213, 238, and 242 each coordinate Zn(2+). The 'KMSKS' region motif lies at 270-274 (KMSKS). Residue Lys-273 participates in ATP binding.

The protein belongs to the class-I aminoacyl-tRNA synthetase family. As to quaternary structure, monomer. Zn(2+) serves as cofactor.

Its subcellular location is the cytoplasm. It carries out the reaction tRNA(Cys) + L-cysteine + ATP = L-cysteinyl-tRNA(Cys) + AMP + diphosphate. The protein is Cysteine--tRNA ligase of Francisella tularensis subsp. holarctica (strain LVS).